The following is a 255-amino-acid chain: Type III pantothenate kinase (255 aa).

6 to 13 is an ATP binding site; it reads DVGNTNTV. Residues Y100 and 107–110 each bind substrate; that span reads GADR. D109 (proton acceptor) is an active-site residue. D129 contacts K(+). T132 is an ATP binding site. T184 is a substrate binding site.

This sequence belongs to the type III pantothenate kinase family. In terms of assembly, homodimer. The cofactor is NH4(+). K(+) is required as a cofactor.

It is found in the cytoplasm. The catalysed reaction is (R)-pantothenate + ATP = (R)-4'-phosphopantothenate + ADP + H(+). It functions in the pathway cofactor biosynthesis; coenzyme A biosynthesis; CoA from (R)-pantothenate: step 1/5. Functionally, catalyzes the phosphorylation of pantothenate (Pan), the first step in CoA biosynthesis. The chain is Type III pantothenate kinase from Syntrophotalea carbinolica (strain DSM 2380 / NBRC 103641 / GraBd1) (Pelobacter carbinolicus).